The sequence spans 593 residues: Potassium channel KAT6 (593 aa).

The Cytoplasmic segment spans residues 1 to 33; sequence MAASRSELLRPAFGEPSPSLGPFVVNPHTCSYR. The chain crosses the membrane as a helical span at residues 34 to 54; the sequence is WWQKFLIVLVLYTAWASPFEL. Residues 55 to 64 are Extracellular-facing; it reads AMEKSASAAL. Residues 65–85 traverse the membrane as a helical segment; the sequence is AVTELVVDAFFAVDIAVSFFV. Residues 86 to 106 lie on the Cytoplasmic side of the membrane; the sequence is AYRDASTGLLVTDRKKIATRH. A helical transmembrane segment spans residues 107-129; sequence LARPCLALDVASTIPLQMIYRIV. Residues 130–138 lie on the Extracellular side of the membrane; the sequence is SGKRQALYG. A helical; Voltage-sensor membrane pass occupies residues 139-159; that stretch reads LLNLLRLWRLRRVSKLFARLE. The Cytoplasmic segment spans residues 160-173; that stretch reads KDIRFSYLWTRLIK. The helical transmembrane segment at 174 to 194 threads the bilayer; that stretch reads LLYVTLFAVHFASCIYLWMAF. The Extracellular segment spans residues 195–221; the sequence is HHKAKELTWIGSQFHGFEDRSVWFCYT. Positions 222 to 241 form an intramembrane region, pore-forming; that stretch reads CAVYWSITTLATVGYGDLHA. At 242–247 the chain is on the extracellular side; sequence ANTGEM. The helical transmembrane segment at 248–268 threads the bilayer; that stretch reads LFSIAFMLFNMGLTSYIIGNI. Residues 269–593 are Cytoplasmic-facing; that stretch reads TNLVVHETTN…RDGDHLFFSW (325 aa). Residue 350–470 participates in a nucleoside 3',5'-cyclic phosphate binding; that stretch reads LFQGVSDKLV…VVVFSNFVLY (121 aa). Residues 522-593 form the KHA domain; that stretch reads RVSIHEHLLN…RDGDHLFFSW (72 aa).

The protein belongs to the potassium channel family. Plant (TC 1.A.1.4) subfamily.

It localises to the membrane. In terms of biological role, probable inward-rectifying potassium channel. Assuming opened or closed conformations in response to the voltage difference across the membrane, the channel is activated by hyperpolarization. This is Potassium channel KAT6 from Oryza sativa subsp. japonica (Rice).